A 224-amino-acid chain; its full sequence is MIKYIALASVVLLVGCSSTAKKPIADDPFYAPVYPDTVPTQVAATGSIYLDSQASSLYSDIRAHRVGDIITVTLKESTQASKSANNEIKKGSDLSVEPVYAGGKNISISGVPIDLGYSDSMNTKRESDADQSNSLDGSISANIIQVLSNGNLVIRGEKWISINNGDEFIRVTGMIRSEDINPDNTIDSTRVANARIQYSGTGTFADSQKVGWLSSFFMSDWWPF.

Residues 1–15 (MIKYIALASVVLLVG) form the signal peptide. Residue Cys-16 is the site of N-palmitoyl cysteine attachment. A lipid anchor (S-diacylglycerol cysteine) is attached at Cys-16.

This sequence belongs to the FlgH family. The basal body constitutes a major portion of the flagellar organelle and consists of four rings (L,P,S, and M) mounted on a central rod.

The protein localises to the cell outer membrane. It localises to the bacterial flagellum basal body. In terms of biological role, assembles around the rod to form the L-ring and probably protects the motor/basal body from shearing forces during rotation. The chain is Flagellar L-ring protein from Shewanella frigidimarina (strain NCIMB 400).